The chain runs to 425 residues: Nicotinate dehydrogenase large molybdopterin subunit (425 aa).

Se-Mo-molybdopterin cytosine dinucleotide is bound by residues glutamine 208 and 238-240; that span reads GFG.

Belongs to the xanthine dehydrogenase family. Heterooctamer of NDHM, NDHL, NDHS and NDHF. Dimer of heterotetramers. The cofactor is Se-Mo-molybdopterin cytosine dinucleotide.

The catalysed reaction is nicotinate + NADP(+) + H2O = 6-hydroxynicotinate + NADPH + H(+). The protein operates within cofactor degradation; nicotinate degradation; 6-hydroxynicotinate from nicotinate: step 1/1. Reversibly inactivated by selenide and sulfide. Not inhibited by cyanide. Catalyzes the hydroxylation of nicotinate to 6-hydroxynicotinate. Also active against 2-pyrazinecarboxylic acid, but inactive against other nicotinate analogs. This Eubacterium barkeri (Clostridium barkeri) protein is Nicotinate dehydrogenase large molybdopterin subunit (ndhL).